The sequence spans 337 residues: tRNA N6-adenosine threonylcarbamoyltransferase (337 aa).

His-111 and His-115 together coordinate Fe cation. Residues 134–138, Asp-167, Gly-180, and Asn-272 each bind substrate; that span reads LVSGG. Asp-300 is a Fe cation binding site.

It belongs to the KAE1 / TsaD family. Fe(2+) is required as a cofactor.

Its subcellular location is the cytoplasm. The catalysed reaction is L-threonylcarbamoyladenylate + adenosine(37) in tRNA = N(6)-L-threonylcarbamoyladenosine(37) in tRNA + AMP + H(+). In terms of biological role, required for the formation of a threonylcarbamoyl group on adenosine at position 37 (t(6)A37) in tRNAs that read codons beginning with adenine. Is involved in the transfer of the threonylcarbamoyl moiety of threonylcarbamoyl-AMP (TC-AMP) to the N6 group of A37, together with TsaE and TsaB. TsaD likely plays a direct catalytic role in this reaction. This chain is tRNA N6-adenosine threonylcarbamoyltransferase, found in Escherichia coli (strain SMS-3-5 / SECEC).